The following is a 241-amino-acid chain: Xyloglucan-specific endo-beta-1,4-glucanase 1 (241 aa).

The N-terminal stretch at Met1 to Ala19 is a signal peptide. Residue Glu136 is part of the active site. Asn174 and Asn190 each carry an N-linked (GlcNAc...) asparagine glycan. The active site involves Glu222.

The protein belongs to the glycosyl hydrolase 12 (cellulase H) family. In terms of assembly, interacts with host apoplastic glucanase inhibitor GIP1.

It is found in the secreted. It localises to the host. It carries out the reaction xyloglucan + H2O = xyloglucan oligosaccharides.. The xyloglucanase activity is inhibited by the binding of the host apoplastic glucanase inhibitor GIP1. In terms of biological role, glycoside hydrolase that exhibits xyloglucanase activity. Acts as an important virulence factor during P.sojae infection but also acts as a pathogen-associated molecular pattern (PAMP) in soybean and solanaceous species, where it can trigger defense responses including cell death. XEG1-induced cell death can be suppressed by P.sojae RxLR effectors. The PAMP activity is independent of its xyloglucanase activity. XEG1 induces plant defense responses in a RLP kinase Serk3/Bak1-dependent manner in Nicotiana benthamiana. Moreover, the perception of XEG1 occurs independently of the perception of ethylene-inducing xylanase Eix2 in Tomato. With truncated paralog XLP1, is required to elevate apoplastic sugar during P.sojae infection. The sequence is that of Xyloglucan-specific endo-beta-1,4-glucanase 1 from Phytophthora sojae (strain P6497) (Soybean stem and root rot agent).